A 439-amino-acid polypeptide reads, in one-letter code: GTPase Obg (439 aa).

The 160-residue stretch at 5–164 folds into the Obg domain; the sequence is TDFFDQATIV…LTLELELKML (160 aa). The 171-residue stretch at 165–335 folds into the OBG-type G domain; that stretch reads ADVGLVGFPN…LLQRVAELLR (171 aa). GTP-binding positions include 171–178, 196–200, 217–220, 287–290, and 316–318; these read GFPNAGKS, FTTLT, DIPG, NKAD, and SAA. The Mg(2+) site is built by Ser-178 and Thr-198. Residues 337-359 are disordered; it reads DPPPQRDPVDPDEPPLEWPLPPV. Residues 356–433 form the OCT domain; it reads LPPVDENAFT…IGRAELVWDD (78 aa).

This sequence belongs to the TRAFAC class OBG-HflX-like GTPase superfamily. OBG GTPase family. In terms of assembly, monomer. Requires Mg(2+) as cofactor.

It is found in the cytoplasm. Functionally, an essential GTPase which binds GTP, GDP and possibly (p)ppGpp with moderate affinity, with high nucleotide exchange rates and a fairly low GTP hydrolysis rate. Plays a role in control of the cell cycle, stress response, ribosome biogenesis and in those bacteria that undergo differentiation, in morphogenesis control. The chain is GTPase Obg from Chloroflexus aggregans (strain MD-66 / DSM 9485).